The primary structure comprises 222 residues: Octanoyltransferase (222 aa).

The 181-residue stretch at 34–214 folds into the BPL/LPL catalytic domain; the sequence is GEAPSTVLLL…EFRKHEEALV (181 aa). Residues 72–79, 144–146, and 157–159 each bind substrate; these read RGGKLTWH, AIG, and GVA. The Acyl-thioester intermediate role is filled by cysteine 175.

The protein belongs to the LipB family.

The protein localises to the cytoplasm. The catalysed reaction is octanoyl-[ACP] + L-lysyl-[protein] = N(6)-octanoyl-L-lysyl-[protein] + holo-[ACP] + H(+). It participates in protein modification; protein lipoylation via endogenous pathway; protein N(6)-(lipoyl)lysine from octanoyl-[acyl-carrier-protein]: step 1/2. Functionally, catalyzes the transfer of endogenously produced octanoic acid from octanoyl-acyl-carrier-protein onto the lipoyl domains of lipoate-dependent enzymes. Lipoyl-ACP can also act as a substrate although octanoyl-ACP is likely to be the physiological substrate. This Pseudarthrobacter chlorophenolicus (strain ATCC 700700 / DSM 12829 / CIP 107037 / JCM 12360 / KCTC 9906 / NCIMB 13794 / A6) (Arthrobacter chlorophenolicus) protein is Octanoyltransferase.